Here is a 546-residue protein sequence, read N- to C-terminus: Glucose-6-phosphate isomerase (546 aa).

Glu352 functions as the Proton donor in the catalytic mechanism. Active-site residues include His383 and Lys511.

This sequence belongs to the GPI family.

The protein localises to the cytoplasm. The enzyme catalyses alpha-D-glucose 6-phosphate = beta-D-fructose 6-phosphate. It functions in the pathway carbohydrate biosynthesis; gluconeogenesis. The protein operates within carbohydrate degradation; glycolysis; D-glyceraldehyde 3-phosphate and glycerone phosphate from D-glucose: step 2/4. In terms of biological role, catalyzes the reversible isomerization of glucose-6-phosphate to fructose-6-phosphate. This chain is Glucose-6-phosphate isomerase, found in Paramagnetospirillum magneticum (strain ATCC 700264 / AMB-1) (Magnetospirillum magneticum).